We begin with the raw amino-acid sequence, 597 residues long: Probable translation initiation factor IF-2 (597 aa).

The tr-type G domain maps to 4–221; that stretch reads IRQPIIAVLG…LIAGLSQKYL (218 aa). Residues 13–20 form a G1 region; it reads GHVDHGKT. Residue 13-20 coordinates GTP; sequence GHVDHGKT. Positions 38–42 are G2; the sequence is GITQH. The G3 stretch occupies residues 77–80; it reads DTPG. GTP contacts are provided by residues 77 to 81 and 131 to 134; these read DTPGH and NKID. Residues 131–134 form a G4 region; the sequence is NKID. The interval 199-201 is G5; the sequence is SAK.

This sequence belongs to the TRAFAC class translation factor GTPase superfamily. Classic translation factor GTPase family. IF-2 subfamily.

Function in general translation initiation by promoting the binding of the formylmethionine-tRNA to ribosomes. Seems to function along with eIF-2. The sequence is that of Probable translation initiation factor IF-2 from Thermococcus onnurineus (strain NA1).